The primary structure comprises 110 residues: Phosphoribosyl-ATP pyrophosphatase (110 aa).

It belongs to the PRA-PH family.

It is found in the cytoplasm. It catalyses the reaction 1-(5-phospho-beta-D-ribosyl)-ATP + H2O = 1-(5-phospho-beta-D-ribosyl)-5'-AMP + diphosphate + H(+). Its pathway is amino-acid biosynthesis; L-histidine biosynthesis; L-histidine from 5-phospho-alpha-D-ribose 1-diphosphate: step 2/9. The polypeptide is Phosphoribosyl-ATP pyrophosphatase (hisE) (Azotobacter chroococcum mcd 1).